The sequence spans 939 residues: Trafficking kinesin-binding protein 1 (939 aa).

Residues 46-353 (LEEQLPHYKL…EELKNLRNKT (308 aa)) enclose the HAP1 N-terminal domain. Residues 106-354 (KTYNDIDAVT…ELKNLRNKTM (249 aa)) adopt a coiled-coil conformation. The interval 359–509 (RYHSLGLFPM…SLRRENYLSE (151 aa)) is interaction with HGS. S444 carries an O-linked (GlcNAc) serine glycan. A disordered region spans residues 472–492 (LGNEDHNKKPGTPGTPGSHDL). The stretch at 490-524 (HDLETALRRLSLRRENYLSERRFFEEEQERKLREL) forms a coiled coil. Position 534 is a phosphoserine (S534). Residues 655 to 669 (PGKCMSQTNSTFTFT) are interaction with OGT. O-linked (GlcNAc) serine glycans are attached at residues S677 and S716. Phosphoserine is present on residues S716 and S905.

The protein belongs to the milton family. As to quaternary structure, interacts with RHOT1 and RHOT2. Found in a complex with KIF5B, OGT, RHOT1 and RHOT2. Interacts with HGS. Interacts with GABRA1. Interacts with KIF5C. Interacts with OGT; stable interaction is not required for glycosylation of this protein by OGT. Isoform 1 interacts with OGT. In terms of processing, O-glycosylated. Glycosylated by OGT; glycosylation in response to increased extracellular glucose levels is required for and leads to regulation of mitochondrial motility by OGT. As to expression, widely expressed with the greatest expression in brain, liver and kidney. Detected throughout the CNS, including the cortex, hippocamps, thalamus and various subcortical nuclei of the forebrain and midbrain, the granule of Purkinje layers of the cerebellum and the gray matter of the spinal cord. High level detected in lower moter neurons (at protein level).

It localises to the cytoplasm. It is found in the nucleus. Its subcellular location is the mitochondrion. The protein resides in the early endosome. The protein localises to the endosome. It localises to the mitochondrion membrane. It is found in the cell cortex. Involved in the regulation of endosome-to-lysosome trafficking, including endocytic trafficking of EGF-EGFR complexes and GABA-A receptors. Involved in mitochondrial motility. When O-glycosylated, abolishes mitochondrial motility. Crucial for recruiting OGT to the mitochondrial surface of neuronal processes. TRAK1 and RHOT form an essential protein complex that links KIF5 to mitochondria for light chain-independent, anterograde transport of mitochondria. In Mus musculus (Mouse), this protein is Trafficking kinesin-binding protein 1 (Trak1).